The chain runs to 347 residues: NADH-ubiquinone oxidoreductase chain 2 (347 aa).

11 helical membrane passes run 3-23, 25-45, 59-79, 96-116, 122-144, 149-171, 178-198, 202-222, 247-267, 276-296, and 326-346; these read PLIF…VMMS, HWLM…PLLM, YFLT…INLL, IIMT…FWVP, ISLS…VLYV, INLD…GGLN, ILAY…VFNP, LLNL…FMVA, IMLS…WMII, ITLA…YMRL, and LPVL…ITLL.

This sequence belongs to the complex I subunit 2 family. In terms of assembly, core subunit of respiratory chain NADH dehydrogenase (Complex I) which is composed of 45 different subunits. Interacts with TMEM242.

It is found in the mitochondrion inner membrane. It carries out the reaction a ubiquinone + NADH + 5 H(+)(in) = a ubiquinol + NAD(+) + 4 H(+)(out). Functionally, core subunit of the mitochondrial membrane respiratory chain NADH dehydrogenase (Complex I) which catalyzes electron transfer from NADH through the respiratory chain, using ubiquinone as an electron acceptor. Essential for the catalytic activity and assembly of complex I. The protein is NADH-ubiquinone oxidoreductase chain 2 of Saccopteryx bilineata (Greater white-lined bat).